The sequence spans 260 residues: Triosephosphate isomerase (260 aa).

11-13 (NWK) contacts substrate. H103 functions as the Electrophile in the catalytic mechanism. Residue E175 is the Proton acceptor of the active site. Residues G181, S220, and 241–242 (GG) contribute to the substrate site.

The protein belongs to the triosephosphate isomerase family. In terms of assembly, homodimer.

The protein resides in the cytoplasm. It catalyses the reaction D-glyceraldehyde 3-phosphate = dihydroxyacetone phosphate. Its pathway is carbohydrate biosynthesis; gluconeogenesis. The protein operates within carbohydrate degradation; glycolysis; D-glyceraldehyde 3-phosphate from glycerone phosphate: step 1/1. Involved in the gluconeogenesis. Catalyzes stereospecifically the conversion of dihydroxyacetone phosphate (DHAP) to D-glyceraldehyde-3-phosphate (G3P). The chain is Triosephosphate isomerase from Shewanella denitrificans (strain OS217 / ATCC BAA-1090 / DSM 15013).